Here is a 416-residue protein sequence, read N- to C-terminus: Serine hydroxymethyltransferase (416 aa).

(6S)-5,6,7,8-tetrahydrofolate contacts are provided by residues Leu-117 and 121–123 (GHL). The residue at position 225 (Lys-225) is an N6-(pyridoxal phosphate)lysine. 351–353 (SPF) provides a ligand contact to (6S)-5,6,7,8-tetrahydrofolate.

It belongs to the SHMT family. In terms of assembly, homodimer. The cofactor is pyridoxal 5'-phosphate.

Its subcellular location is the cytoplasm. The enzyme catalyses (6R)-5,10-methylene-5,6,7,8-tetrahydrofolate + glycine + H2O = (6S)-5,6,7,8-tetrahydrofolate + L-serine. It functions in the pathway one-carbon metabolism; tetrahydrofolate interconversion. It participates in amino-acid biosynthesis; glycine biosynthesis; glycine from L-serine: step 1/1. In terms of biological role, catalyzes the reversible interconversion of serine and glycine with tetrahydrofolate (THF) serving as the one-carbon carrier. This reaction serves as the major source of one-carbon groups required for the biosynthesis of purines, thymidylate, methionine, and other important biomolecules. Also exhibits THF-independent aldolase activity toward beta-hydroxyamino acids, producing glycine and aldehydes, via a retro-aldol mechanism. In Blochmanniella pennsylvanica (strain BPEN), this protein is Serine hydroxymethyltransferase.